Reading from the N-terminus, the 100-residue chain is Insertion element IS600 uncharacterized 11 kDa protein (100 aa).

The protein belongs to the transposase 8 family.

The polypeptide is Insertion element IS600 uncharacterized 11 kDa protein (Shigella sonnei).